The following is a 337-amino-acid chain: F420-dependent glucose-6-phosphate dehydrogenase (337 aa).

Residue D44 participates in coenzyme F420-(gamma-Glu)n binding. Residue H45 is the Proton donor of the active site. Residues T81 and 112–113 (TG) contribute to the coenzyme F420-(gamma-Glu)n site. E114 functions as the Proton acceptor in the catalytic mechanism. Coenzyme F420-(gamma-Glu)n contacts are provided by residues N117, 180-181 (GG), and 183-184 (GV). Substrate-binding residues include T198, K201, K262, and R286.

Belongs to the F420-dependent glucose-6-phosphate dehydrogenase family. In terms of assembly, homodimer.

It carries out the reaction oxidized coenzyme F420-(gamma-L-Glu)(n) + D-glucose 6-phosphate + H(+) = 6-phospho-D-glucono-1,5-lactone + reduced coenzyme F420-(gamma-L-Glu)(n). In terms of biological role, catalyzes the coenzyme F420-dependent oxidation of glucose 6-phosphate (G6P) to 6-phosphogluconolactone. The protein is F420-dependent glucose-6-phosphate dehydrogenase of Kineococcus radiotolerans (strain ATCC BAA-149 / DSM 14245 / SRS30216).